An 811-amino-acid polypeptide reads, in one-letter code: tRNA(Met) cytidine acetyltransferase TmcA (811 aa).

ATP contacts are provided by Gln-267 and Arg-439. The 190-residue stretch at 473-662 (KKEVYLEEPD…GEFTAIVLKP (190 aa)) folds into the N-acetyltransferase domain. Acetyl-CoA contacts are provided by residues 589–591 (IAT), Glu-629, and Arg-636.

This sequence belongs to the TmcA family.

It is found in the cytoplasm. The enzyme catalyses cytidine(34) in elongator tRNA(Met) + acetyl-CoA + ATP + H2O = N(4)-acetylcytidine(34) in elongator tRNA(Met) + ADP + phosphate + CoA + H(+). It catalyses the reaction a cytidine in RNA + acetyl-CoA + ATP + H2O = an N(4)-acetylcytidine in RNA + ADP + phosphate + CoA + H(+). It carries out the reaction a cytidine in tRNA + acetyl-CoA + ATP + H2O = an N(4)-acetylcytidine in tRNA + ADP + phosphate + CoA + H(+). The catalysed reaction is a cytidine in mRNA + acetyl-CoA + ATP + H2O = an N(4)-acetylcytidine in mRNA + ADP + phosphate + CoA + H(+). In terms of biological role, catalyzes the formation of N(4)-acetylcytidine (ac(4)C) at the wobble position of tRNA(Met), by using acetyl-CoA as an acetyl donor and ATP (or GTP). Catalyzes the formation of 267 N(4)-acetylcytidine (ac(4)C) sites in RNA, almost always on the middle C of a CCG motif. Modifications are found in rRNA, ncRNA, mRNA and tRNA. More acetylation is observed at 95 than at 75 or 85 degrees Celsius. The chain is tRNA(Met) cytidine acetyltransferase TmcA from Thermococcus sp. (strain AM4).